The sequence spans 2187 residues: Nascent polypeptide-associated complex subunit alpha, muscle-specific form (2187 aa).

Disordered regions lie at residues 1–20 (MPGE…PQPQ), 32–73 (LKVA…STPF), and 172–196 (IPPL…KGTA). The span at 9 to 20 (VPATEQELPQPQ) shows a compositional bias: polar residues. Over residues 178–192 (KTSTSQVPSQGTLNL) the composition is skewed to polar residues. Arginine 247 bears the Asymmetric dimethylarginine mark. 5 disordered regions span residues 335–370 (DSGA…LSPK), 579–611 (NTVS…SPLV), 738–835 (PKGS…PKDT), 884–1847 (KETL…PVEK), and 1892–2053 (PEAV…KAMS). Positions 347-369 (SAVTNELCSPPGSSNVAGTSLSP) are enriched in polar residues. At threonine 590 the chain carries Phosphothreonine. 3 stretches are compositionally biased toward polar residues: residues 599 to 609 (AKNTAPSTTSP), 818 to 835 (VTPT…PKDT), and 887 to 905 (LATS…TPKS). Serine 822 is subject to Phosphoserine. Over residues 941 to 951 (PHVPPTSPPKS) the composition is skewed to pro residues. Residues 976-998 (TPTYPKKSPKPAASKKTPATPSP) are compositionally biased toward low complexity. Over residues 1106-1122 (TPQNATPNESLAASSQK) the composition is skewed to polar residues. 2 positions are modified to phosphoserine: serine 1174 and serine 1177. A compositionally biased stretch (low complexity) spans 1174-1195 (SPLSPKKASKTAAPKEAPATPS). Phosphothreonine is present on threonine 1364. Residues serine 1368 and serine 1392 each carry the phosphoserine modification. At threonine 1398 the chain carries Phosphothreonine. Phosphoserine occurs at positions 1400 and 1423. The span at 1429–1440 (VTPSSKKLSQTV) shows a compositional bias: polar residues. Low complexity predominate over residues 1489–1504 (SPSSPKKAPKTAAPPS). Serine 1492 bears the Phosphoserine mark. Polar residues predominate over residues 1609–1631 (PVTTSLAQTAPPSLQKAPSTTIP). Composition is skewed to low complexity over residues 1636-1670 (AAPA…TAPK) and 1714-1727 (SSPP…KRAS). Positions 1762–1772 (ACSTGTTTPQA) are enriched in polar residues. 2 stretches are compositionally biased toward low complexity: residues 1806–1823 (KSPG…CPDP) and 1892–1914 (PEAV…LAPS). Residues 1950-1954 (PPLIP) carry the PXLXP motif. Residues 1973 to 1983 (APKPAGTPAPA) are compositionally biased toward pro residues. Positions 2001–2014 (SDSDESVPELEEQD) are enriched in acidic residues. Serine 2015 carries the post-translational modification Phosphoserine; by ILK1. Low complexity predominate over residues 2016–2029 (TQTATQQAQLAAAA). The tract at residues 2041–2052 (QSRSEKKARKAM) is required for DNA-binding. An NAC-A/B domain is found at 2042–2107 (SRSEKKARKA…AKIEDLSQQA (66 aa)). Serine 2104 carries the post-translational modification Phosphoserine. Residue lysine 2114 is modified to N6-acetyllysine; alternate. Residue lysine 2114 forms a Glycyl lysine isopeptide (Lys-Gly) (interchain with G-Cter in SUMO2); alternate linkage. Threonine 2131 is modified (phosphothreonine; by GSK3-beta). Threonine 2133 carries the phosphothreonine modification. 4 positions are modified to phosphoserine: serine 2138, serine 2158, serine 2163, and serine 2175. The UBA domain maps to 2148-2185 (VEVKDIELVMSQANVSRAKAVRALKNNSNDIVNAIMEL).

It belongs to the NAC-alpha family. In terms of assembly, interacts (via PXLXP motif) with the muscle-restricted histone methyltransferase SMYD1 (via MYND-type zinc finger). Post-translationally, phosphorylation of Ser-2015 by ILK during cell adhesion may promote nuclear localization. Phosphorylation of Thr-2131 by GSK3B may promote proteasome mediated degradation. As to expression, specifically expressed in heart and skeletal muscle: it is present in differentiated myotubes but not in myoblasts.

The protein localises to the cytoplasm. The protein resides in the nucleus. In terms of biological role, cardiac- and muscle-specific transcription factor. May act to regulate the expression of genes involved in the development of myotubes. Plays a critical role in ventricular cardiomyocyte expansion and regulates postnatal skeletal muscle growth and regeneration. Involved in the organized assembly of thick and thin filaments of myofibril sarcomeres. The sequence is that of Nascent polypeptide-associated complex subunit alpha, muscle-specific form (Naca) from Mus musculus (Mouse).